The following is a 206-amino-acid chain: CASP-like protein 4B2 (206 aa).

2 stretches are compositionally biased toward low complexity: residues 1-12 and 24-36; these read MAMVPADADAAA and SSQNGAPNSAAAA. Positions 1–42 are disordered; the sequence is MAMVPADADAAAKPPPDVEKPDYSSQNGAPNSAAAAAGGGGG. The Cytoplasmic segment spans residues 1–60; the sequence is MAMVPADADAAAKPPPDVEKPDYSSQNGAPNSAAAAAGGGGGGVVDSVVARWRREDMLDK. A helical transmembrane segment spans residues 61 to 81; the sequence is SPLALHAAAAAFAFVALVLVA. Over 82–99 the chain is Extracellular; that stretch reads SNQHGDWMEFDRYQEYRY. The helical transmembrane segment at 100–120 threads the bilayer; sequence LLAIAALAFAYSLAQALRHAL. The Cytoplasmic portion of the chain corresponds to 121–138; it reads RMRRGVDPVPTASGRLLD. The chain crosses the membrane as a helical span at residues 139–159; it reads FASDQVVAYLLMSALSAATPI. Residues 160-174 are Extracellular-facing; that stretch reads TNRMRSAVINRFTDT. The helical transmembrane segment at 175 to 195 threads the bilayer; that stretch reads TAAAISMAFLAFVSLALSAIV. At 196-206 the chain is on the cytoplasmic side; that stretch reads SGYKLSKQTYM.

The protein belongs to the Casparian strip membrane proteins (CASP) family. Homodimer and heterodimers.

It localises to the cell membrane. In Oryza sativa subsp. japonica (Rice), this protein is CASP-like protein 4B2.